The following is a 328-amino-acid chain: L-lactate dehydrogenase (328 aa).

Residues valine 18, glutamate 39, lysine 46, tyrosine 71, and 85-86 (GA) each bind NAD(+). Substrate is bound by residues glutamine 88 and arginine 94. Residues serine 107, 124 to 126 (AAN), and serine 149 contribute to the NAD(+) site. 126 to 129 (NPVD) provides a ligand contact to substrate. 154–157 (DSAR) is a substrate binding site. Beta-D-fructose 1,6-bisphosphate-binding residues include arginine 159 and histidine 174. Histidine 181 acts as the Proton acceptor in catalysis. Tyrosine 226 carries the phosphotyrosine modification. Substrate is bound at residue threonine 235.

Belongs to the LDH/MDH superfamily. LDH family. In terms of assembly, homotetramer.

Its subcellular location is the cytoplasm. It catalyses the reaction (S)-lactate + NAD(+) = pyruvate + NADH + H(+). Its pathway is fermentation; pyruvate fermentation to lactate; (S)-lactate from pyruvate: step 1/1. Its activity is regulated as follows. Allosterically activated by fructose 1,6-bisphosphate (FBP). Catalyzes the conversion of lactate to pyruvate. The chain is L-lactate dehydrogenase from Streptococcus gordonii (strain Challis / ATCC 35105 / BCRC 15272 / CH1 / DL1 / V288).